We begin with the raw amino-acid sequence, 487 residues long: MRAQPKASHFIDGEYVEDAAGTVIESIYPATGEIIARLHAATPGIVEKAIAAAKRAQPEWAAMSPTARGRILKRAAELMRQRNRELSELETLDTGKPIQETIVADPTSGADSFEFFGGVAPAALNGDYIPLGGDFAYTKRVPLGVCVGIGAWNYPQQIACWKGAPALVAGNAMVFKPSENTPLGALKIAEILIEAGLPKGLFNVIQGDRATGPLLVNHPDVAKVSLTGSVPTGKKVAGAAAAELKHVTMELGGKSPLIVFDDADLESAIGGAMLGNFYSTGQVCSNGTRVFVQRKIKEPFLARLKERTEAIVIGDPLDEATQLGPMVSAAQRDKVFSYIGKGKAEGARLVTGGGIPNNVSGEGTYIQPTVFADVTDGMTIAREEIFGPVMCVLDFDDEVEVIARANATEFGLSAGVFTADLTRAHRVADRLEAGTLWINTYNLCPVEIPFGGSKQSGFGRENSVAALNHYTELKTVYVGMGPVEAPY.

K(+) is bound by residues serine 26, isoleucine 27, and aspartate 93. 150 to 152 (GAW) is an NAD(+) binding site. The active-site Charge relay system is the lysine 162. NAD(+) contacts are provided by residues 176–179 (KPSE) and 229–232 (SVPT). Leucine 244 contributes to the K(+) binding site. The active-site Proton acceptor is the glutamate 250. NAD(+) contacts are provided by glycine 252, cysteine 284, and glutamate 384. Cysteine 284 serves as the catalytic Nucleophile. Cysteine sulfenic acid (-SOH) is present on cysteine 284. K(+)-binding residues include lysine 454 and glycine 457. The active-site Charge relay system is glutamate 461.

The protein belongs to the aldehyde dehydrogenase family. Dimer of dimers. K(+) is required as a cofactor.

It carries out the reaction betaine aldehyde + NAD(+) + H2O = glycine betaine + NADH + 2 H(+). The protein operates within amine and polyamine biosynthesis; betaine biosynthesis via choline pathway; betaine from betaine aldehyde: step 1/1. Involved in the biosynthesis of the osmoprotectant glycine betaine. Catalyzes the irreversible oxidation of betaine aldehyde to the corresponding acid. The protein is Betaine aldehyde dehydrogenase 1 of Rhizobium meliloti (strain 1021) (Ensifer meliloti).